The following is a 1035-amino-acid chain: DNA polymerase catalytic subunit (1035 aa).

Belongs to the DNA polymerase type-B family.

It is found in the host nucleus. It carries out the reaction DNA(n) + a 2'-deoxyribonucleoside 5'-triphosphate = DNA(n+1) + diphosphate. The protein is DNA polymerase catalytic subunit (UL54) of Macaca mulatta (Rhesus macaque).